An 83-amino-acid chain; its full sequence is Small ribosomal subunit protein uS17c (83 aa).

The protein belongs to the universal ribosomal protein uS17 family. In terms of assembly, part of the 30S ribosomal subunit.

Its subcellular location is the plastid. The protein resides in the chloroplast. One of the primary rRNA binding proteins, it binds specifically to the 5'-end of 16S ribosomal RNA. This is Small ribosomal subunit protein uS17c (rps17) from Pyropia yezoensis (Susabi-nori).